A 447-amino-acid polypeptide reads, in one-letter code: MNQNHTILQNLPVGQKVGIAFSGGLDTSAALLWMKLKGALPYAYTANLGQPDEDDYNAIPKKAMEYGAENARLIDCRAQLAHEGIAAIQCGAFHVSTGGIAYFNTTPLGRAVTGTMLVSAMKEDDVNIWGDGSTYKGNDIERFYRYGLLTNPALKIYKPWLDQQFIDELGGRHEMSEFLIANGFNYKMSVEKAYSTDSNMLGATHEAKDLEFLNSGIKIVKPIMGVAFWDENVEIEPEEVSVRFEEGVPVALNGKEYADPVELFLEANRIGGRHGLGMSDQIENRIIEAKSRGIYEAPGMALFHIAYERLVTGIHNEDTIEQYRINGLRLGRLLYQGRWFDSQALMLRETAQRWVAKAVTGEVTLELRRGNDYSILNTESPNLTYQPERLSMEKVEGAAFTPLDRIGQLTMRNLDITDTRAKLGIYSQSGLLSLGEGSVLPQLGNKQ.

ATP is bound by residues 20–28 (AFSGGLDTS) and Ala46. Tyr102 is a binding site for L-citrulline. ATP-binding residues include Gly132 and Thr134. 3 residues coordinate L-aspartate: Thr134, Asn138, and Asp139. Asn138 serves as a coordination point for L-citrulline. Position 139 (Asp139) interacts with ATP. The L-citrulline site is built by Arg142 and Ser195. Asp197 is an ATP binding site. Residues Thr204, Glu206, and Glu283 each contribute to the L-citrulline site.

The protein belongs to the argininosuccinate synthase family. Type 2 subfamily. As to quaternary structure, homotetramer.

The protein resides in the cytoplasm. It carries out the reaction L-citrulline + L-aspartate + ATP = 2-(N(omega)-L-arginino)succinate + AMP + diphosphate + H(+). Its pathway is amino-acid biosynthesis; L-arginine biosynthesis; L-arginine from L-ornithine and carbamoyl phosphate: step 2/3. The protein is Argininosuccinate synthase of Neisseria gonorrhoeae (strain ATCC 700825 / FA 1090).